A 236-amino-acid polypeptide reads, in one-letter code: Ubiquinone biosynthesis O-methyltransferase (236 aa).

The S-adenosyl-L-methionine site is built by R36, G60, D81, and L123.

This sequence belongs to the methyltransferase superfamily. UbiG/COQ3 family.

The enzyme catalyses a 3-demethylubiquinol + S-adenosyl-L-methionine = a ubiquinol + S-adenosyl-L-homocysteine + H(+). It catalyses the reaction a 3-(all-trans-polyprenyl)benzene-1,2-diol + S-adenosyl-L-methionine = a 2-methoxy-6-(all-trans-polyprenyl)phenol + S-adenosyl-L-homocysteine + H(+). The protein operates within cofactor biosynthesis; ubiquinone biosynthesis. O-methyltransferase that catalyzes the 2 O-methylation steps in the ubiquinone biosynthetic pathway. The sequence is that of Ubiquinone biosynthesis O-methyltransferase from Rickettsia canadensis (strain McKiel).